Consider the following 445-residue polypeptide: Histone acetyltransferase ESA1 (445 aa).

Phosphoserine is present on S17. The 53-residue stretch at 22–74 (IIKCQCWVQKNDEERLAEILSINTRKAPPKFYVHYVNYNKRLDEWITTDRINL) folds into the Tudor-knot domain. Residues 88-114 (EDNKKQKKKKATNTSETPQDSLQDGVD) are disordered. The segment covering 99–109 (TNTSETPQDSL) has biased composition (polar residues). In terms of domain architecture, MYST-type HAT spans 162–433 (ARVRNLNRII…IDPNRLIWKP (272 aa)). The C2HC MYST-type; degenerate zinc finger occupies 195 to 220 (IYIDDFTLQYFGSKKQYERYRKKCTL). The short motif at 245–266 (RTWCRNLCLLSKLFLDHKTLYY) is the ESA1-RPD3 motif element. N6-acetyllysine; by autocatalysis is present on K262. Residues 303 to 307 (ACILT) and 312 to 318 (QRMGYGK) contribute to the acetyl-CoA site. The Proton donor/acceptor role is filled by E338. S342 is an acetyl-CoA binding site.

The protein belongs to the MYST (SAS/MOZ) family. Component of the NuA4 histone acetyltransferase complex composed of at least ACT1, ARP4, EAF3, EAF5, EAF6, EAF7, EPL1, ESA1, SWC4, TRA1, VID21, YAF9 and YNG2. The complex interacts with histones H4 (HHF1 and HHF2), H3 (HHT1 and HHT2) and H2A (HTA1 and HTA2). Autoacetylation at Lys-262 is required for proper function.

The enzyme catalyses L-lysyl-[histone] + acetyl-CoA = N(6)-acetyl-L-lysyl-[histone] + CoA + H(+). It carries out the reaction L-lysyl-[protein] + acetyl-CoA = N(6)-acetyl-L-lysyl-[protein] + CoA + H(+). It catalyses the reaction 2-hydroxyisobutanoyl-CoA + L-lysyl-[protein] = N(6)-(2-hydroxyisobutanoyl)-L-lysyl-[protein] + CoA + H(+). The catalysed reaction is (2E)-butenoyl-CoA + L-lysyl-[protein] = N(6)-(2E)-butenoyl-L-lysyl-[protein] + CoA + H(+). Its function is as follows. Catalytic component of the NuA4 histone acetyltransferase (HAT), a multiprotein complex involved in epigenetic transcriptional activation of selected genes principally by acetylation of nucleosomal histones H4, H3, H2B, H2A and H2A variant H2A.Z. Acetylates histone H4 to form H4K5ac, H4K8ac, H4K12ac and H4K16ac, histone H3 to form H3K14ac, histone H2B to form H2BK16ac, histone H2A to form H2AK4ac and H2AK7ac, and histone variant H2A.Z to form H2A.ZK14ac. Acetylation of histones gives a specific tag for epigenetic transcription initiation and elongation. Acetylation of histone H4 is essential for DNA double-strand break repair through homologous recombination. Involved in cell cycle progression. Recruitment to promoters depends on H3K4me. Also acetylates non-histone proteins, such as ATG3 and PAH1. Regulates autophagy by acetylating ATG3, controlling interaction the interaction between ATG3 and ATG8 and ATG8 lipidation. Acts as a regulator of fatty-acid-induced triacylglycerol synthesis by catalyzing acetylation of PAH1, thereby promoting the synthesis of diacylglycerol. In addition to protein acetyltransferase, can use different acyl-CoA substrates, such as 2-hydroxyisobutanoyl-CoA (2-hydroxyisobutyryl-CoA) or (2E)-butenoyl-CoA (crotonyl-CoA), and is able to mediate protein 2-hydroxyisobutyrylation and crotonylation, respectively. Catalyzes histone crotonylation. This Saccharomyces cerevisiae (strain ATCC 204508 / S288c) (Baker's yeast) protein is Histone acetyltransferase ESA1.